The sequence spans 539 residues: Chaperonin GroEL (539 aa).

ATP contacts are provided by residues Thr29–Pro32, Asp86–Thr90, Gly413, Asp477–Leu479, and Asp493.

Belongs to the chaperonin (HSP60) family. Forms a cylinder of 14 subunits composed of two heptameric rings stacked back-to-back. Interacts with the co-chaperonin GroES.

The protein resides in the cytoplasm. The catalysed reaction is ATP + H2O + a folded polypeptide = ADP + phosphate + an unfolded polypeptide.. Together with its co-chaperonin GroES, plays an essential role in assisting protein folding. The GroEL-GroES system forms a nano-cage that allows encapsulation of the non-native substrate proteins and provides a physical environment optimized to promote and accelerate protein folding. This chain is Chaperonin GroEL, found in Clostridium perfringens (strain ATCC 13124 / DSM 756 / JCM 1290 / NCIMB 6125 / NCTC 8237 / Type A).